Here is a 254-residue protein sequence, read N- to C-terminus: Methylthioribulose-1-phosphate dehydratase (254 aa).

Position 110 (cysteine 110) interacts with substrate. Zn(2+) contacts are provided by histidine 127 and histidine 129. The Proton donor/acceptor role is filled by glutamate 156. Residue histidine 212 coordinates Zn(2+).

The protein belongs to the aldolase class II family. MtnB subfamily. Requires Zn(2+) as cofactor.

It localises to the cytoplasm. The catalysed reaction is 5-(methylsulfanyl)-D-ribulose 1-phosphate = 5-methylsulfanyl-2,3-dioxopentyl phosphate + H2O. The protein operates within amino-acid biosynthesis; L-methionine biosynthesis via salvage pathway; L-methionine from S-methyl-5-thio-alpha-D-ribose 1-phosphate: step 2/6. Functionally, catalyzes the dehydration of methylthioribulose-1-phosphate (MTRu-1-P) into 2,3-diketo-5-methylthiopentyl-1-phosphate (DK-MTP-1-P). In Talaromyces marneffei (strain ATCC 18224 / CBS 334.59 / QM 7333) (Penicillium marneffei), this protein is Methylthioribulose-1-phosphate dehydratase.